We begin with the raw amino-acid sequence, 317 residues long: Phospho-N-acetylmuramoyl-pentapeptide-transferase (317 aa).

9 consecutive transmembrane segments (helical) span residues 6 to 26, 52 to 72, 78 to 98, 114 to 134, 145 to 165, 171 to 191, 194 to 214, 223 to 244, and 297 to 317; these read IVMAIVISFIVASILGPIIIP, PTIGGLIFIFATIITMFIMVG, AMIALYSFVGFGFVGFLDDLL, MILLLIVSGFLTWYAYKYIGT, INFGLFYIPFVMFYFAGVTNA, GLDGLATSVTVLVTTFLGIIS, LGHISLAIFCVALAGALLAFL, VFMGDTGSLALGGAVAMVALIL, and KIVSVFSIITVVFCFIAFASL.

The protein belongs to the glycosyltransferase 4 family. MraY subfamily. It depends on Mg(2+) as a cofactor.

The protein localises to the cell membrane. The catalysed reaction is UDP-N-acetyl-alpha-D-muramoyl-L-alanyl-gamma-D-glutamyl-meso-2,6-diaminopimeloyl-D-alanyl-D-alanine + di-trans,octa-cis-undecaprenyl phosphate = di-trans,octa-cis-undecaprenyl diphospho-N-acetyl-alpha-D-muramoyl-L-alanyl-D-glutamyl-meso-2,6-diaminopimeloyl-D-alanyl-D-alanine + UMP. It functions in the pathway cell wall biogenesis; peptidoglycan biosynthesis. In terms of biological role, catalyzes the initial step of the lipid cycle reactions in the biosynthesis of the cell wall peptidoglycan: transfers peptidoglycan precursor phospho-MurNAc-pentapeptide from UDP-MurNAc-pentapeptide onto the lipid carrier undecaprenyl phosphate, yielding undecaprenyl-pyrophosphoryl-MurNAc-pentapeptide, known as lipid I. This Clostridium perfringens (strain 13 / Type A) protein is Phospho-N-acetylmuramoyl-pentapeptide-transferase.